The primary structure comprises 185 residues: Ribosome-recycling factor (185 aa).

Belongs to the RRF family.

The protein resides in the cytoplasm. Functionally, responsible for the release of ribosomes from messenger RNA at the termination of protein biosynthesis. May increase the efficiency of translation by recycling ribosomes from one round of translation to another. This Pectobacterium atrosepticum (strain SCRI 1043 / ATCC BAA-672) (Erwinia carotovora subsp. atroseptica) protein is Ribosome-recycling factor.